The sequence spans 238 residues: UPF0328 protein ECU07_0010 (238 aa).

Disordered regions lie at residues 1–154 (MAAP…NTQR) and 211–238 (GRLHGSPTKGAQTAQQAQPHPPKQLATL). A compositionally biased stretch (basic and acidic residues) spans 106-128 (HTEGCHTHEANPEPNTKHTETES). Polar residues predominate over residues 129–152 (PKPQTSTQHHTPITIPSSLLSQNT).

The protein belongs to the UPF0328 family.

The polypeptide is UPF0328 protein ECU07_0010 (Encephalitozoon cuniculi (strain GB-M1) (Microsporidian parasite)).